We begin with the raw amino-acid sequence, 769 residues long: MINIEDISKSSNQSEEKQLKSTSSKPKYSFAAKSLFKGSNNITPYYLSTSNTFQCVASESIQTWLLSDDGHIFTSSGNFVLDVSSGGYFVELVQLNSNSKTQIWTIDTTNNKIQNQGNGKYLDIDNLNICVAPLNGNATQQWTTFRRAPIPTGNWGYFQSKQMDSNNNYWGLSVLNNSKSYNTSVVMNKVQAKSKGQIWQMTNDGHILSRLDGSLVLDIGPSINGSTTNYYLDTNVYKANDLKQQWGINENNQIFNQYYPNLCIGFVGELGVDSTVNCVLAQPSSASDINFQWITNPTYSLNEIVSEVPEPFPAYTSGDLLASYQYLSNIATSNFTDDIRSLYTGINVSLQSFLSIVTNATCPSSIHSTEDFSNVQNQIKTELIYAIDVRLVFENYSGFYSKLFSQGSSNLTNLANLINVDMSSNQMVNANYTDAITSVFYSLISEIPVGGSIIANIGQSAVEWGELISQSNYQGASTYQVELSQLYSHLNTNYENEMANAQSMKDTILQDWGMMSKTYALCFLPTNDPSSLNINGLNFEKISDVASVAYEIAMIQMLLPTTYQIYFTPAGYWVPYSDGDFAYSDNSGTYIMATIEYSNSYPPKELTDKLWNNGVSKQEFFWSAYGWNLATSLTYYNMANKFGNIYKLAFPTIKNFTGVPMQFVMTNDGDNLCNFPVKTHFAKFFSIYYSCGDLGHHYFDIAVNDINDNKVANFTVDINLEAIEGSYVSIKTGSLVVQPGYAVGNPICNQGSYSLMFSASILIPIYKSE.

The disordered stretch occupies residues 1 to 22 (MINIEDISKSSNQSEEKQLKST). 2 consecutive Ricin B-type lectin domains span residues 25–145 (KPKY…WTTF) and 158–296 (FQSK…WITN).

This sequence belongs to the cup family.

The protein localises to the cytoplasm. The protein resides in the membrane. Functionally, may play an important role in stabilizing and/or regulating the cell membrane during Ca(2+) stress or certain stages of development. The protein is Calcium up-regulated protein B (cupB) of Dictyostelium discoideum (Social amoeba).